Consider the following 356-residue polypeptide: S-adenosylmethionine:tRNA ribosyltransferase-isomerase (356 aa).

It belongs to the QueA family. As to quaternary structure, monomer.

The protein resides in the cytoplasm. It carries out the reaction 7-aminomethyl-7-carbaguanosine(34) in tRNA + S-adenosyl-L-methionine = epoxyqueuosine(34) in tRNA + adenine + L-methionine + 2 H(+). The protein operates within tRNA modification; tRNA-queuosine biosynthesis. Its function is as follows. Transfers and isomerizes the ribose moiety from AdoMet to the 7-aminomethyl group of 7-deazaguanine (preQ1-tRNA) to give epoxyqueuosine (oQ-tRNA). The polypeptide is S-adenosylmethionine:tRNA ribosyltransferase-isomerase (Salmonella arizonae (strain ATCC BAA-731 / CDC346-86 / RSK2980)).